We begin with the raw amino-acid sequence, 702 residues long: Methionine--tRNA ligase (702 aa).

The 'HIGH' region motif lies at 23-33 (PYANGPLHLGH). Zn(2+) contacts are provided by Cys154, Cys157, Cys167, and Cys170. Residues 341 to 345 (KMSKS) carry the 'KMSKS' region motif. Lys344 contributes to the ATP binding site. The disordered stretch occupies residues 562–593 (LAPPPASAKQQNASMSNTAPPPTAEEPETTAP). Residues 569–578 (AKQQNASMSN) are compositionally biased toward polar residues. The tRNA-binding domain occupies 599–702 (DFAKLDLRIG…SSAQPGMPVR (104 aa)).

The protein belongs to the class-I aminoacyl-tRNA synthetase family. MetG type 1 subfamily. In terms of assembly, homodimer. Zn(2+) is required as a cofactor.

The protein localises to the cytoplasm. It carries out the reaction tRNA(Met) + L-methionine + ATP = L-methionyl-tRNA(Met) + AMP + diphosphate. Its function is as follows. Is required not only for elongation of protein synthesis but also for the initiation of all mRNA translation through initiator tRNA(fMet) aminoacylation. The sequence is that of Methionine--tRNA ligase from Xylella fastidiosa (strain M12).